Consider the following 49-residue polypeptide: Zinc-containing ferredoxin (49 aa).

Positions 1–36 (GIDPNYRTSRQVVGEHQGHKVYGPVDPPKVLGIHGT) are N-terminal extension. Zn(2+)-binding residues include His-16 and His-19. N6-methyllysine is present on Lys-29. His-34 serves as a coordination point for Zn(2+). The segment at 37–49 (IVXVDFDLCIADG) is ferredoxin. Cys-45 is a [3Fe-4S] cluster binding site.

[3Fe-4S] cluster serves as cofactor. [4Fe-4S] cluster is required as a cofactor. Requires Zn(2+) as cofactor.

Functionally, ferredoxins are iron-sulfur proteins that transfer electrons in a wide variety of metabolic reactions. This Acidianus infernus protein is Zinc-containing ferredoxin (zfx).